The primary structure comprises 238 residues: MGRKWANIVAKKTAKDGATSKVYAKFGVEIYAAAKQGEPDPESNSSLKFVIERAKQAQVPKHVIDKAIDKAKGGGDETFVQGRYEGFGPNGSMVIAETLTSNVNRTIANVRTTFHKNGGNIGAAGAVSYMFDNTGVIVFEGTDPDHIFEILLDAEVDVRDVTEEEGNIVVYTEPTDLHKGIAALKEAGITEFSTTELEMIPQSEVELSPEDLEIFEGLIDALEDDDDVQKVYHNVANL.

It belongs to the TACO1 family. YeeN subfamily.

The protein localises to the cytoplasm. This Lactococcus lactis subsp. lactis (strain IL1403) (Streptococcus lactis) protein is Probable transcriptional regulatory protein YcdB (ycdB).